We begin with the raw amino-acid sequence, 557 residues long: Coiled-coil domain-containing protein 22 homolog (557 aa).

Coiled-coil stretches lie at residues arginine 260–glutamine 350 and glutamate 489–asparagine 554.

The protein belongs to the CCDC22 family.

This chain is Coiled-coil domain-containing protein 22 homolog, found in Anopheles gambiae (African malaria mosquito).